The sequence spans 364 residues: MSEMGFLRSVAAVLLLAVFSHAAVVTENGLPIQWRKAPSDLSHLPISNTGVQVNPWVYSQRMTMLKMVINATNAYMSSMGPGEQENPLWSLPLQLGWKLKSGRLADPTPDSSSTCGSEASDPVCISPLSFFGCVNYYLSVLPFLAAVETGVVSSGGHQMLIQVPAEVAQDYCSSYSDCSTKHPNTMAKWHLFFQSLRQVSQSKESDFNKKDSILGLMWAAEEESIQTASGACTERQKLYSSPEVSFQQSSVNLGAFISAAHYHASIERSGKFMSHLPSRVLQEADSPPNIADLSTEENHALYMLSWMNSINQLLGGSLVDLWRKAMCSAQAREKGQAFLDDLILDPKFPGSSLWSIICVMSTSC.

An N-terminal signal peptide occupies residues 1-22; the sequence is MSEMGFLRSVAAVLLLAVFSHA. Residue Asn70 is glycosylated (N-linked (GlcNAc...) asparagine).

This sequence belongs to the LEG1 family. As to expression, detected in all tissues tested, with the highest levels in serum (at protein level). At mRNA level, only expressed in liver.

The protein resides in the secreted. Functionally, involved in early development of liver, exocrine pancreas and intestine, probably through cell cycle regulation. In liver, its function is partially redundant with leg1a function. The protein is Protein leg1b of Danio rerio (Zebrafish).